Here is a 417-residue protein sequence, read N- to C-terminus: Gamma-glutamyl phosphate reductase (417 aa).

The protein belongs to the gamma-glutamyl phosphate reductase family.

The protein resides in the cytoplasm. It carries out the reaction L-glutamate 5-semialdehyde + phosphate + NADP(+) = L-glutamyl 5-phosphate + NADPH + H(+). It participates in amino-acid biosynthesis; L-proline biosynthesis; L-glutamate 5-semialdehyde from L-glutamate: step 2/2. Functionally, catalyzes the NADPH-dependent reduction of L-glutamate 5-phosphate into L-glutamate 5-semialdehyde and phosphate. The product spontaneously undergoes cyclization to form 1-pyrroline-5-carboxylate. The polypeptide is Gamma-glutamyl phosphate reductase (Idiomarina loihiensis (strain ATCC BAA-735 / DSM 15497 / L2-TR)).